We begin with the raw amino-acid sequence, 461 residues long: UDP-glycosyltransferase 88B1 (461 aa).

Residues Ser-278, 340-341 (WA), 358-366 (HCGWNSSLE), and 380-383 (YAEQ) each bind UDP-alpha-D-glucose.

It belongs to the UDP-glycosyltransferase family.

Functionally, may glycosylate diterpenes or flavonols in leaves. This Stevia rebaudiana (Stevia) protein is UDP-glycosyltransferase 88B1.